Here is a 219-residue protein sequence, read N- to C-terminus: Cytidylate kinase (219 aa).

21–29 lines the ATP pocket; it reads GPAASGKGT.

It belongs to the cytidylate kinase family. Type 1 subfamily.

The protein localises to the cytoplasm. The catalysed reaction is CMP + ATP = CDP + ADP. The enzyme catalyses dCMP + ATP = dCDP + ADP. This Rickettsia rickettsii (strain Iowa) protein is Cytidylate kinase.